Here is an 87-residue protein sequence, read N- to C-terminus: uncharacterized protein (87 aa).

The helical transmembrane segment at 13-33 (LMIVSAVFGGIGIITTIVFVI) threads the bilayer. Positions 66–87 (EECGGSTETSSSKPKKKAKKEV) are disordered. Over residues 78–87 (KPKKKAKKEV) the composition is skewed to basic residues.

It localises to the membrane. This is an uncharacterized protein from Caenorhabditis elegans.